Consider the following 344-residue polypeptide: Dihydroorotase (344 aa).

Zn(2+) is bound by residues His-13 and His-15. Substrate contacts are provided by residues 15-17 and Asn-41; that span reads HLR. The Zn(2+) site is built by Lys-98, His-135, and His-173. At Lys-98 the chain carries N6-carboxylysine. Position 135 (His-135) interacts with substrate. Leu-218 is a binding site for substrate. Residue Asp-247 coordinates Zn(2+). Asp-247 is a catalytic residue. Substrate contacts are provided by His-251 and Ala-263.

Belongs to the metallo-dependent hydrolases superfamily. DHOase family. Class II DHOase subfamily. As to quaternary structure, homodimer. It depends on Zn(2+) as a cofactor.

It catalyses the reaction (S)-dihydroorotate + H2O = N-carbamoyl-L-aspartate + H(+). Its pathway is pyrimidine metabolism; UMP biosynthesis via de novo pathway; (S)-dihydroorotate from bicarbonate: step 3/3. Functionally, catalyzes the reversible cyclization of carbamoyl aspartate to dihydroorotate. In Neisseria meningitidis serogroup C / serotype 2a (strain ATCC 700532 / DSM 15464 / FAM18), this protein is Dihydroorotase.